The chain runs to 164 residues: R-phycoerythrin alpha chain (164 aa).

(2R,3E)-phycoerythrobilin contacts are provided by Asn-47, Lys-81, Cys-82, Arg-84, His-88, Arg-137, Cys-139, and Arg-142.

Belongs to the phycobiliprotein family. As to quaternary structure, heterododecamer of 6 alpha and 6 beta chains. The basic functional unit of phycobiliproteins is a ring-shaped hexamer formed from two back-to-back trimers contacting via the alpha chain subunits. The trimers are composed of alpha/beta subunit heterodimers arranged around a three-fold axis of symmetry. The phycoerythrins also contain a gamma subunit which is located in the center of the hexamer. In terms of processing, contains two covalently linked phycoerythrobilin chromophores.

It is found in the plastid. The protein localises to the chloroplast thylakoid membrane. Its function is as follows. Light-harvesting photosynthetic tetrapyrrole chromophore-protein from the phycobiliprotein complex. This is R-phycoerythrin alpha chain (cpeA) from Griffithsia monilis (Red alga).